The following is a 155-amino-acid chain: MMPNTDVSSLSMLGQQTETAKSPEEAVLEKVPSNHAGTDYVVRFTAPEFTSLCPMTGQPDFAHIVIDYIPSEWLVESKSLKLFLHSFRNHGAFHEDCSIYIAKRIVELLDPKWLRIGAYWYPRGGIPIDVFWQTGKPPEGVWLPEQGVATYRGRG.

Positions 1 to 20 are enriched in polar residues; that stretch reads MMPNTDVSSLSMLGQQTETA. A disordered region spans residues 1 to 26; sequence MMPNTDVSSLSMLGQQTETAKSPEEA. The active-site Thioimide intermediate is C53. Residue D60 is the Proton donor of the active site. Substrate is bound by residues 75 to 77 and 94 to 95; these read VES and HE.

It belongs to the GTP cyclohydrolase I family. QueF type 1 subfamily.

The protein localises to the cytoplasm. It catalyses the reaction 7-aminomethyl-7-carbaguanine + 2 NADP(+) = 7-cyano-7-deazaguanine + 2 NADPH + 3 H(+). It participates in tRNA modification; tRNA-queuosine biosynthesis. Catalyzes the NADPH-dependent reduction of 7-cyano-7-deazaguanine (preQ0) to 7-aminomethyl-7-deazaguanine (preQ1). This chain is NADPH-dependent 7-cyano-7-deazaguanine reductase, found in Rhizobium etli (strain CIAT 652).